A 115-amino-acid polypeptide reads, in one-letter code: Large ribosomal subunit protein uL22 (115 aa).

The protein belongs to the universal ribosomal protein uL22 family. In terms of assembly, part of the 50S ribosomal subunit.

This protein binds specifically to 23S rRNA; its binding is stimulated by other ribosomal proteins, e.g. L4, L17, and L20. It is important during the early stages of 50S assembly. It makes multiple contacts with different domains of the 23S rRNA in the assembled 50S subunit and ribosome. Its function is as follows. The globular domain of the protein is located near the polypeptide exit tunnel on the outside of the subunit, while an extended beta-hairpin is found that lines the wall of the exit tunnel in the center of the 70S ribosome. The chain is Large ribosomal subunit protein uL22 from Limosilactobacillus reuteri subsp. reuteri (strain JCM 1112) (Lactobacillus reuteri).